Reading from the N-terminus, the 527-residue chain is Peptide chain release factor 3 (527 aa).

Positions Ala11 to Leu278 constitute a tr-type G domain. Residues Ser20–Thr27, Asp87–His91, and Asn141–Asp144 each bind GTP.

This sequence belongs to the TRAFAC class translation factor GTPase superfamily. Classic translation factor GTPase family. PrfC subfamily.

Its subcellular location is the cytoplasm. Functionally, increases the formation of ribosomal termination complexes and stimulates activities of RF-1 and RF-2. It binds guanine nucleotides and has strong preference for UGA stop codons. It may interact directly with the ribosome. The stimulation of RF-1 and RF-2 is significantly reduced by GTP and GDP, but not by GMP. This is Peptide chain release factor 3 from Teredinibacter turnerae (strain ATCC 39867 / T7901).